Consider the following 498-residue polypeptide: Isocitrate dehydrogenase [NADP], mitochondrial (498 aa).

Residues 164–166 (TIT) and R171 contribute to the NADP(+) site. T166 contributes to the substrate binding site. Residues 183-189 (SPNGTIR), R198, and R221 each bind substrate. Mn(2+) is bound at residue D339. Position 347 (K347) interacts with NADP(+). D362 provides a ligand contact to Mn(2+). Residues 397-402 (GTVTRH) and N415 contribute to the NADP(+) site.

Belongs to the isocitrate and isopropylmalate dehydrogenases family. Requires Mg(2+) as cofactor. Mn(2+) serves as cofactor.

It localises to the mitochondrion. It carries out the reaction D-threo-isocitrate + NADP(+) = 2-oxoglutarate + CO2 + NADPH. This Aspergillus niger protein is Isocitrate dehydrogenase [NADP], mitochondrial (icdA).